A 307-amino-acid polypeptide reads, in one-letter code: Ribosomal RNA small subunit methyltransferase H (307 aa).

S-adenosyl-L-methionine contacts are provided by residues 33 to 35, Asp51, Phe82, Asp96, and Gln103; that span reads GGY.

Belongs to the methyltransferase superfamily. RsmH family.

Its subcellular location is the cytoplasm. The enzyme catalyses cytidine(1402) in 16S rRNA + S-adenosyl-L-methionine = N(4)-methylcytidine(1402) in 16S rRNA + S-adenosyl-L-homocysteine + H(+). Functionally, specifically methylates the N4 position of cytidine in position 1402 (C1402) of 16S rRNA. The sequence is that of Ribosomal RNA small subunit methyltransferase H from Rickettsia africae (strain ESF-5).